A 202-amino-acid chain; its full sequence is Securin (202 aa).

A2 carries the N-acetylalanine modification. Residues 35-94 (LDGRSQVSTPRFGKTFDAPPALPKATRKALGTVNRATEKSVKTKGPLKQKQPSFSAKKMT) form a disordered region. The short motif at 61-64 (RKAL) is the D-box element. 2 consecutive short sequence motifs (TEK-box) follow at residues 71–73 (TEK) and 94–96 (TEK). An SH3-binding motif is present at residues 163–173 (PPSPVRMPSPP). S165 carries the post-translational modification Phosphoserine; by CDK1.

This sequence belongs to the securin family. Interacts with RPS10 and DNAJA1. Interacts with the caspase-like ESPL1, and prevents its protease activity probably by covering its active site. Interacts with TP53 and blocks its activity probably by blocking its binding to DNA. Interacts with the Ku 70 kDa subunit of ds-DNA kinase. Interacts with PTTG1IP. Post-translationally, phosphorylated at Ser-165 by CDK1 during mitosis. Phosphorylated in vitro by ds-DNA kinase. In terms of processing, ubiquitinated through 'Lys-11' linkage of ubiquitin moieties by the anaphase promoting complex (APC) at the onset of anaphase, conducting to its degradation. 'Lys-11'-linked ubiquitination is mediated by the E2 ligase UBE2C/UBCH10.

It is found in the cytoplasm. The protein resides in the nucleus. Regulatory protein, which plays a central role in chromosome stability, in the p53/TP53 pathway, and DNA repair. Probably acts by blocking the action of key proteins. During the mitosis, it blocks Separase/ESPL1 function, preventing the proteolysis of the cohesin complex and the subsequent segregation of the chromosomes. At the onset of anaphase, it is ubiquitinated, conducting to its destruction and to the liberation of ESPL1. Its function is however not limited to a blocking activity, since it is required to activate ESPL1. Negatively regulates the transcriptional activity and related apoptosis activity of TP53. The negative regulation of TP53 may explain the strong transforming capability of the protein when it is overexpressed. May also play a role in DNA repair via its interaction with Ku, possibly by connecting DNA damage-response pathways with sister chromatid separation. This Gorilla gorilla gorilla (Western lowland gorilla) protein is Securin (PTTG1).